Reading from the N-terminus, the 96-residue chain is Keratin-associated protein 12-1 (96 aa).

A run of 14 repeats spans residues 10–14 (CQPAC), 15–19 (CAPSP), 24–28 (CYIPV), 30–34 (CQSSV), 35–39 (CVPVS), 45–49 (CVPVR), 50–54 (CQSSV), 55–59 (CVPVS), 60–64 (CRPVV), 70–74 (CQSSG), 75–79 (CCQPS), 80–84 (CTSVL), 85–89 (CRPIS), and 90–94 (CSTPS). Positions 10 to 94 (CQPACCAPSP…CRPISCSTPS (85 aa)) are 14 X 5 AA approximate repeats.

This sequence belongs to the KRTAP type 12 family. In terms of assembly, interacts with hair keratins. Restricted to a narrow region of the hair fiber cuticle, lying approximately 20 cell layers above the apex of the dermal papilla of the hair root; not detected in any other tissues.

Its function is as follows. In the hair cortex, hair keratin intermediate filaments are embedded in an interfilamentous matrix, consisting of hair keratin-associated proteins (KRTAP), which are essential for the formation of a rigid and resistant hair shaft through their extensive disulfide bond cross-linking with abundant cysteine residues of hair keratins. The matrix proteins include the high-sulfur and high-glycine-tyrosine keratins. This Homo sapiens (Human) protein is Keratin-associated protein 12-1 (KRTAP12-1).